The primary structure comprises 339 residues: Ketol-acid reductoisomerase (NADP(+)) (339 aa).

Residues 1-182 (MRVYYDRDAD…GGGRSGVIET (182 aa)) form the KARI N-terminal Rossmann domain. Residues 24–27 (YGSQ), Arg-48, Ser-51, Thr-53, and 83–86 (DELQ) contribute to the NADP(+) site. His-108 is a catalytic residue. Gly-134 provides a ligand contact to NADP(+). A KARI C-terminal knotted domain is found at 183–328 (NFREECETDL…GRLRAMMPWI (146 aa)). The Mg(2+) site is built by Asp-191, Glu-195, Glu-227, and Glu-231. Ser-252 serves as a coordination point for substrate.

The protein belongs to the ketol-acid reductoisomerase family. Mg(2+) is required as a cofactor.

It carries out the reaction (2R)-2,3-dihydroxy-3-methylbutanoate + NADP(+) = (2S)-2-acetolactate + NADPH + H(+). The enzyme catalyses (2R,3R)-2,3-dihydroxy-3-methylpentanoate + NADP(+) = (S)-2-ethyl-2-hydroxy-3-oxobutanoate + NADPH + H(+). The protein operates within amino-acid biosynthesis; L-isoleucine biosynthesis; L-isoleucine from 2-oxobutanoate: step 2/4. It participates in amino-acid biosynthesis; L-valine biosynthesis; L-valine from pyruvate: step 2/4. Its function is as follows. Involved in the biosynthesis of branched-chain amino acids (BCAA). Catalyzes an alkyl-migration followed by a ketol-acid reduction of (S)-2-acetolactate (S2AL) to yield (R)-2,3-dihydroxy-isovalerate. In the isomerase reaction, S2AL is rearranged via a Mg-dependent methyl migration to produce 3-hydroxy-3-methyl-2-ketobutyrate (HMKB). In the reductase reaction, this 2-ketoacid undergoes a metal-dependent reduction by NADPH to yield (R)-2,3-dihydroxy-isovalerate. The chain is Ketol-acid reductoisomerase (NADP(+)) from Phenylobacterium zucineum (strain HLK1).